The following is a 566-amino-acid chain: uncharacterized protein (566 aa).

This sequence belongs to the protein kinase superfamily. ADCK protein kinase family.

This is an uncharacterized protein from Synechocystis sp. (strain ATCC 27184 / PCC 6803 / Kazusa).